An 850-amino-acid polypeptide reads, in one-letter code: RPA-related protein RADX (850 aa).

The interval 1–31 (MSGESGQPQPGPSHAGLYLEHPERDQAGVPG) is disordered. The OB DNA-binding region spans 228 to 331 (WNSRKNFPAL…LISTMEICLN (104 aa)). 2 disordered regions span residues 575-612 (EAFW…MGSQ) and 632-671 (GPSA…GKSR). A compositionally biased stretch (basic and acidic residues) spans 590 to 608 (GKEDHCHERGSKRSQDDRP). A compositionally biased stretch (polar residues) spans 643–668 (PHSSAQMKGSKHNTPSQESSTAYTTG).

Its subcellular location is the chromosome. In terms of biological role, single-stranded DNA-binding protein recruited to replication forks to maintain genome stability. Prevents fork collapse by antagonizing the accumulation of RAD51 at forks to ensure the proper balance of fork remodeling and protection without interfering with the capacity of cells to complete homologous recombination of double-strand breaks. This is RPA-related protein RADX from Mus musculus (Mouse).